Consider the following 453-residue polypeptide: UDP-glucosyltransferase avaP (453 aa).

Belongs to the UDP-glycosyltransferase family.

It participates in secondary metabolite biosynthesis. Its function is as follows. UDP-glucosyltransferase; part of the cluster that mediates the biosynthesis of a highly modified cyclo-arginine-tryptophan dipeptide (cRW). The first step of the pathway is perfornmed by the arginine-containing cyclodipeptide synthase (RCPDS) avaA that acts as the scaffold-generating enzyme and is responsible for formation of the cyclo-Arg-Trp (cRW) diketopiperazine. AvaB then acts as a multifunctional flavoenzyme that is responsible for generating the cyclo-Arg-formylkynurenine DKP, which can be deformylated by avaC. AvaB then further catalyzes an additional N-oxidation followed by cyclization and dehydration. The next step is an N-acetylation of the guanidine group catalyzed by the arginine N-acetyltransferase avaD. The roles of the additional enzymes identified within the ava cluster still have to be determined. The polypeptide is UDP-glucosyltransferase avaP (Aspergillus versicolor).